The primary structure comprises 693 residues: Alpha-glucosidase (693 aa).

Catalysis depends on residues Asp320 and Glu323. Catalysis depends on Asp416, which acts as the Proton donor.

This sequence belongs to the glycosyl hydrolase 31 family.

It localises to the cytoplasm. It carries out the reaction Hydrolysis of terminal, non-reducing (1-&gt;4)-linked alpha-D-glucose residues with release of alpha-D-glucose.. Functionally, major soluble alpha-glucosidase. The sequence is that of Alpha-glucosidase (malA) from Saccharolobus solfataricus (strain ATCC 35092 / DSM 1617 / JCM 11322 / P2) (Sulfolobus solfataricus).